Consider the following 373-residue polypeptide: S-adenosylmethionine:tRNA ribosyltransferase-isomerase (373 aa).

It belongs to the QueA family. As to quaternary structure, monomer.

It is found in the cytoplasm. It carries out the reaction 7-aminomethyl-7-carbaguanosine(34) in tRNA + S-adenosyl-L-methionine = epoxyqueuosine(34) in tRNA + adenine + L-methionine + 2 H(+). The protein operates within tRNA modification; tRNA-queuosine biosynthesis. Functionally, transfers and isomerizes the ribose moiety from AdoMet to the 7-aminomethyl group of 7-deazaguanine (preQ1-tRNA) to give epoxyqueuosine (oQ-tRNA). This Prochlorococcus marinus (strain MIT 9515) protein is S-adenosylmethionine:tRNA ribosyltransferase-isomerase.